A 466-amino-acid polypeptide reads, in one-letter code: Methylenetetrahydrofolate--tRNA-(uracil-5-)-methyltransferase TrmFO (466 aa).

14 to 19 contributes to the FAD binding site; the sequence is GGGLAG.

The protein belongs to the MnmG family. TrmFO subfamily. Requires FAD as cofactor.

Its subcellular location is the cytoplasm. It carries out the reaction uridine(54) in tRNA + (6R)-5,10-methylene-5,6,7,8-tetrahydrofolate + NADH + H(+) = 5-methyluridine(54) in tRNA + (6S)-5,6,7,8-tetrahydrofolate + NAD(+). It catalyses the reaction uridine(54) in tRNA + (6R)-5,10-methylene-5,6,7,8-tetrahydrofolate + NADPH + H(+) = 5-methyluridine(54) in tRNA + (6S)-5,6,7,8-tetrahydrofolate + NADP(+). Its function is as follows. Catalyzes the folate-dependent formation of 5-methyl-uridine at position 54 (M-5-U54) in all tRNAs. The polypeptide is Methylenetetrahydrofolate--tRNA-(uracil-5-)-methyltransferase TrmFO (Brucella melitensis biotype 1 (strain ATCC 23456 / CCUG 17765 / NCTC 10094 / 16M)).